A 513-amino-acid chain; its full sequence is QWRF motif-containing protein 9 (513 aa).

3 stretches are compositionally biased toward polar residues: residues 1-26 (MTAATISPSFNANVKQNKPPSFPSES), 43-55 (GTSSFFHQSSPKR), and 65-78 (VTPSSVATNRPQST). Disordered regions lie at residues 1–89 (MTAA…RREV), 115–144 (GTLERRKTTSSATISKSGGGKQEKLKLSDQ), and 184–293 (VSNR…LRVR). Residues 79-89 (PRRESLDRREV) show a composition bias toward basic and acidic residues. Composition is skewed to polar residues over residues 202 to 211 (ESVSSGSSNG) and 244 to 262 (VDSSVLSPKEANSLSSPRG). A QWRF motif motif is present at residues 334–337 (QWQF).

The protein belongs to the QWRF family.

The chain is QWRF motif-containing protein 9 (QWRF9) from Arabidopsis thaliana (Mouse-ear cress).